Reading from the N-terminus, the 698-residue chain is Endogenous retrovirus group K member 21 Env polyprotein (698 aa).

A disordered region spans residues Met1–His25. The signal sequence occupies residues Met1 to Ser88. The segment covering Ala10–Arg20 has biased composition (basic residues). At Leu89–Thr631 the chain is on the extracellular side. N-linked (GlcNAc...) asparagine glycans are attached at residues Asn99, Asn127, Asn152, Asn273, Asn354, Asn371, and Asn460. Residues Phe465–Val485 form a fusion peptide region. Residues Asn506, Asn553, Asn565, and Asn584 are each glycosylated (N-linked (GlcNAc...) asparagine). A helical membrane pass occupies residues Ile632–Leu652. At Val653–Val698 the chain is on the cytoplasmic side.

Belongs to the beta type-B retroviral envelope protein family. HERV class-II K(HML-2) env subfamily. As to quaternary structure, the surface (SU) and transmembrane (TM) proteins form a heterodimer. SU and TM are attached by noncovalent interactions or by a labile interchain disulfide bond. In terms of processing, specific enzymatic cleavages in vivo yield the mature SU and TM proteins.

The protein localises to the cell membrane. Its subcellular location is the virion. Functionally, retroviral envelope proteins mediate receptor recognition and membrane fusion during early infection. Endogenous envelope proteins may have kept, lost or modified their original function during evolution. This endogenous envelope protein has lost its original fusogenic properties. SU mediates receptor recognition. Its function is as follows. TM anchors the envelope heterodimer to the viral membrane through one transmembrane domain. The other hydrophobic domain, called fusion peptide, mediates fusion of the viral membrane with the target cell membrane. In Homo sapiens (Human), this protein is Endogenous retrovirus group K member 21 Env polyprotein (ERVK-21).